Consider the following 428-residue polypeptide: MKFSEEKNVSNNPTNFEGGLDSRKVGQNRRALGVINQNLVVEGRPYPCVVNKRALSERNDVCEKKQADPVHRPITRRFAAKIASTKTSNAEGTTKRSNLAKSSSNGFGDFIFVDDEHKPVEDQPVPMALEQTEPMHSESDQMEEVEMEDIMEEPVMDIDTPDANDPLAVAEYIEDLYSYYRKVESTSCVSPNYMAQQFDINERMRAILVDWLIEVHDKFDLMHETLFLTVNLIDRFLEKQSVVRKKLQLVGLVAMLLACKYEEVSVPVVGDLILISDRAYTRKEVLEMEKVMVNALKFNISVPTAYVFMRRFLKAAQADRKLELLAFFLIELSLVEYAMLKFSPSQLAAAAVYTAQCTMYGVKQWSKTCEWHTNYSEDQLLECSSLMVDFHKKAGTGKLTGAHRKYCTSKFSYTAKCEPASFLLENEL.

Positions 1 to 22 (MKFSEEKNVSNNPTNFEGGLDS) are disordered.

The protein belongs to the cyclin family. Cyclin AB subfamily. Interacts with the CDC2 protein kinase to form a serine/threonine kinase holoenzyme complex also known as maturation promoting factor (MPF). The cyclin subunit imparts substrate specificity to the complex.

In terms of biological role, essential for the control of the cell cycle at the G2/M (mitosis) transition. In Medicago sativa subsp. varia (Alfalfa), this protein is G2/mitotic-specific cyclin-1.